Reading from the N-terminus, the 683-residue chain is Zinc finger protein 510 (683 aa).

The 72-residue stretch at 46-117 (VSFKDVTIEF…EEEFSNQSHP (72 aa)) folds into the KRAB domain. The C2H2-type 1; degenerate zinc finger occupies 254-276 (FECNKIGKAFNDKANCVKHNSSH). C2H2-type zinc fingers lie at residues 404 to 426 (YKCN…QRTH), 432 to 454 (FECS…QRIH), 460 to 482 (YKCN…QRIH), 488 to 510 (YECS…HRIH), 516 to 538 (FQCN…QRTH), 544 to 566 (YQCN…QKTH), 572 to 594 (FKCN…QRIH), 600 to 622 (FKCN…QRIH), and 628 to 650 (FQCN…QRTH).

This sequence belongs to the krueppel C2H2-type zinc-finger protein family.

It is found in the nucleus. May be involved in transcriptional regulation. The chain is Zinc finger protein 510 (ZNF510) from Homo sapiens (Human).